Here is a 472-residue protein sequence, read N- to C-terminus: tRNA-2-methylthio-N(6)-dimethylallyladenosine synthase (472 aa).

Residues 1 to 24 (MTGTPDVFPPATPGGAPLVALPAG) are disordered. The 118-residue stretch at 33-150 (GKLYIKTHGC…LPELIRARRE (118 aa)) folds into the MTTase N-terminal domain. [4Fe-4S] cluster-binding residues include Cys-42, Cys-79, Cys-113, Cys-187, Cys-191, and Cys-194. A Radical SAM core domain is found at 173–407 (RAEGASAFVS…RINAHAAGIS (235 aa)). A TRAM domain is found at 408 to 471 (EKMVGTVQTV…TNSLRARVVA (64 aa)).

It belongs to the methylthiotransferase family. MiaB subfamily. As to quaternary structure, monomer. Requires [4Fe-4S] cluster as cofactor.

It localises to the cytoplasm. It catalyses the reaction N(6)-dimethylallyladenosine(37) in tRNA + (sulfur carrier)-SH + AH2 + 2 S-adenosyl-L-methionine = 2-methylsulfanyl-N(6)-dimethylallyladenosine(37) in tRNA + (sulfur carrier)-H + 5'-deoxyadenosine + L-methionine + A + S-adenosyl-L-homocysteine + 2 H(+). Its function is as follows. Catalyzes the methylthiolation of N6-(dimethylallyl)adenosine (i(6)A), leading to the formation of 2-methylthio-N6-(dimethylallyl)adenosine (ms(2)i(6)A) at position 37 in tRNAs that read codons beginning with uridine. In Stenotrophomonas maltophilia (strain K279a), this protein is tRNA-2-methylthio-N(6)-dimethylallyladenosine synthase.